Consider the following 664-residue polypeptide: Chaperone protein DnaK (664 aa).

Position 201 is a phosphothreonine; by autocatalysis (T201). The segment covering 574-592 (LKEDASTEKIKEASEELSR) has biased composition (basic and acidic residues). The segment at 574 to 664 (LKEDASTEKI…DVEIVDKPND (91 aa)) is disordered. Positions 600-617 (AMQSQSASAAPSSAANAQ) are enriched in low complexity. A compositionally biased stretch (polar residues) spans 639–649 (GNSTSASSNNE).

Belongs to the heat shock protein 70 family.

In terms of biological role, acts as a chaperone. The chain is Chaperone protein DnaK from Chlamydia felis (strain Fe/C-56) (Chlamydophila felis).